A 332-amino-acid polypeptide reads, in one-letter code: Ribosomal RNA small subunit methyltransferase C (332 aa).

The protein belongs to the methyltransferase superfamily. RsmC family. As to quaternary structure, monomer.

The protein resides in the cytoplasm. It catalyses the reaction guanosine(1207) in 16S rRNA + S-adenosyl-L-methionine = N(2)-methylguanosine(1207) in 16S rRNA + S-adenosyl-L-homocysteine + H(+). In terms of biological role, specifically methylates the guanine in position 1207 of 16S rRNA in the 30S particle. In Pseudomonas aeruginosa (strain LESB58), this protein is Ribosomal RNA small subunit methyltransferase C.